We begin with the raw amino-acid sequence, 605 residues long: MKTEAQSYWGGIIKSMGLVFGDIGTSPIYTLTVIMTLTKPDAEHVLGILSLIVWTLIILVTVEYAWLAMSLGRKGEGGTIVLKEILIRLLKSGRQMAFAGFLAFLGVSLLLGDGVITPAISILSAVEGMRLIPGLEDLAQGGLILVAAVIAVFLFIFQFKGTDKVASAFGPIMVVWFSALTVSGLVSIIGTPTVVQAISPHHAVLFLKHNGLAGFFVLSEVILCATGGEALYADMGHLGRKPIIRAWYFVFCALVINYLGQGAFILRNPEAKNILFSMVKSQVPMLYIPFLLLTISATIIASQALISGVFSIVYQGITTRILPLMKVDYTSTHLKSQIYIGSVNWSLLVAVIFIMILFQRSENLAAAYGLAVTGTMFITGIMMTMIFSRTTKKWKVPIALAVTVIDFAYLTANLHKLPHGGYWSLVLASIPLAIMVIWTRGQRALYRSLKPLDLDTFLLSYEQIYAKGHNIPGTGLFFVRETPVVPPYVIHCIIRSNIIYERNVFVSLTRTDEPFDVRTKLTRGIGTGLDAFEVNAGYMERLDIEKLLKKHGVEEKVIFYGIEDIDTSNPVWRIFATIKRQSANFVQFNKLPVSKLQGVVTRVEM.

Helical transmembrane passes span 17 to 37, 45 to 65, 96 to 116, 139 to 159, 169 to 189, 211 to 231, 246 to 266, 286 to 306, 338 to 358, 367 to 387, 394 to 414, and 417 to 437; these read GLVFGDIGTSPIYTLTVIMTL, VLGILSLIVWTLIILVTVEYA, MAFAGFLAFLGVSLLLGDGVI, AQGGLILVAAVIAVFLFIFQF, FGPIMVVWFSALTVSGLVSII, GLAGFFVLSEVILCATGGEAL, AWYFVFCALVINYLGQGAFIL, LYIPFLLLTISATIIASQALI, IYIGSVNWSLLVAVIFIMILF, AYGLAVTGTMFITGIMMTMIF, WKVPIALAVTVIDFAYLTANL, and LPHGGYWSLVLASIPLAIMVI.

It belongs to the HAK/KUP transporter (TC 2.A.72) family.

It localises to the cell inner membrane. The catalysed reaction is K(+)(in) + H(+)(in) = K(+)(out) + H(+)(out). Transport of potassium into the cell. Likely operates as a K(+):H(+) symporter. The protein is Probable potassium transport system protein Kup 2 of Geobacter sulfurreducens (strain ATCC 51573 / DSM 12127 / PCA).